The primary structure comprises 418 residues: Hydroxysteroid dehydrogenase-like protein 2 (418 aa).

Residues 17–23 (GASRGIG), K42, and D74 each bind NADP(+). K42 is modified (N6-(2-hydroxyisobutyryl)lysine). At K116 the chain carries N6-acetyllysine. Y168 acts as the Proton acceptor in catalysis. K172 contributes to the NADP(+) binding site. Positions 287–310 (STGAVPEFKEEKPQPQPKPRSGAV) are disordered. Positions 306–415 (RSGAVEETFR…KLEKLMNQMN (110 aa)) constitute an SCP2 domain. K318 bears the N6-succinyllysine mark.

The protein belongs to the short-chain dehydrogenases/reductases (SDR) family.

It localises to the peroxisome. The protein localises to the mitochondrion. In terms of biological role, has apparently no steroid dehydrogenase activity. Controls bile acid (BA) and lipid metabolism in response to nutritional cues. In Pongo abelii (Sumatran orangutan), this protein is Hydroxysteroid dehydrogenase-like protein 2 (HSDL2).